Reading from the N-terminus, the 204-residue chain is Nicotine blue oxidoreductase (204 aa).

In terms of assembly, homotetramer. FMN serves as cofactor.

The enzyme catalyses 3,3'-bipyridine-2,2',5,5',6,6'-hexol + NADP(+) = (E)-2,2',5,5'-tetrahydroxy-6H,6'H-(3,3'-bipyridinylidene)-6,6'-dione + NADPH + 3 H(+). It carries out the reaction 3,3'-bipyridine-2,2',5,5',6,6'-hexol + NAD(+) = (E)-2,2',5,5'-tetrahydroxy-6H,6'H-(3,3'-bipyridinylidene)-6,6'-dione + NADH + 3 H(+). It participates in alkaloid degradation; nicotine degradation. Its function is as follows. Catalyzes the reduction of nicotine blue to its hydroquinone form. Nicotine blue is the name given to the compound formed by the autocatalytic condensation of two molecules of 2,3,6-trihydroxypyridine, an intermediate in the nicotine degradation pathway. May play a role in preventing the intracellular formation of nicotine blue semiquinone radicals, which by redox cycling would lead to the formation of toxic reactive oxygen species. Besides nicotine blue, several other quinones are reduced by nboR. The sequence is that of Nicotine blue oxidoreductase (nboR) from Paenarthrobacter nicotinovorans (Arthrobacter nicotinovorans).